A 152-amino-acid polypeptide reads, in one-letter code: MKKKINILLINGPNLNLLGTREPEIYGKKTLEQIVNKIKKKSILLNVTLYDFQSNAEHKIVEKIHNCKKNNIQFILINPGAFTHTSISIRDALSAINIPFFEIHISNIFARENFRSHSWMSDIAQGVISGFGNYGYQIALKTAVKFLLEKEK.

Tyr-26 (proton acceptor) is an active-site residue. Substrate contacts are provided by Asn-78, His-84, and Asp-91. His-104 acts as the Proton donor in catalysis. Substrate contacts are provided by residues 105–106 (IS) and Arg-115.

The protein belongs to the type-II 3-dehydroquinase family. Homododecamer.

It catalyses the reaction 3-dehydroquinate = 3-dehydroshikimate + H2O. It functions in the pathway metabolic intermediate biosynthesis; chorismate biosynthesis; chorismate from D-erythrose 4-phosphate and phosphoenolpyruvate: step 3/7. Its function is as follows. Catalyzes a trans-dehydration via an enolate intermediate. The protein is 3-dehydroquinate dehydratase of Buchnera aphidicola subsp. Cinara cedri (strain Cc).